The sequence spans 884 residues: MSKELSPKYNPAEVEEGRYQTWLDQDVFKPSGDTEAKPYSIVIPPPNVTGKLHLGHAWDTTLQDIIIRQKRMQGFDTLWLPGMDHAGIATQAKVEERLREQGISRYDLGREKFLDKVWEWKDEYAATIKSQWGKMGLSVDYSRERFTLDEGLSKAVRKVFVDLYNKGWIYRGEFIINWDPAARTALSDIEVIHKDVEGAFYHMNYMLEDGSRALEVATTRPETMFGDVAVAVNPEDPRYKDLIGQNVILPIINKPIPIIADEHADPEFGTGVVKITPAHDPNDFAVGQRHNLPQVNVMNDDGTMNELADEFNGMDRFEARKAVVAKLESLGNLVKIEKMTHSVGHSERTGVVVEPRLSTQWFVKMDQLAKNAIANQDTEDKVEFYPPRFNDTFMSWMENVHDWVISRQLWWGHQIPAWYNVNGEMYVGEDAPEGDGWTQDEDVLDTWFSSALWPFSTMGWPDTEAADFKRYFPTSTLVTGYDIIFFWVSRMIFQSLEFTGRQPFSNVLIHGLIRDEEGRKMSKSLGNGIDPMDVIEKYGADALRWFLSNGSAPGQDVRFSYEKMDASWNFINKIWNISRYILMNNEGLTLDQARENVEKVVNSQVGNVTDRWILHNLNETVGKVTESFDKFEFGVAGHILYNFIWEEFANWYVELTKEVLYSDNEDEKVVTRSVLLYTLDQILRLLHPIMPFVTEEIFGQYAEGSIVLASYPQVNATFENQTAHKGVESLKDLIRSVRNSRAEVNVAPSKPITILVKTSDSELESFFKDNSNYIKRFTNPETLEISSAITAPELAMTSIITGAEIFLPLADLLNVEEELARLEKELAKWQKELNMVGKKLSNERFVANAKPEVVQKEKDKQTDYQTKYDATIARIEEMKKLNND.

The 'HIGH' region motif lies at 46–56 (PNVTGKLHLGH). The 'KMSKS' region signature appears at 520–524 (KMSKS). An ATP-binding site is contributed by lysine 523. Residues 809-844 (LADLLNVEEELARLEKELAKWQKELNMVGKKLSNER) are a coiled coil.

The protein belongs to the class-I aminoacyl-tRNA synthetase family. ValS type 1 subfamily. Monomer.

The protein resides in the cytoplasm. The enzyme catalyses tRNA(Val) + L-valine + ATP = L-valyl-tRNA(Val) + AMP + diphosphate. Catalyzes the attachment of valine to tRNA(Val). As ValRS can inadvertently accommodate and process structurally similar amino acids such as threonine, to avoid such errors, it has a 'posttransfer' editing activity that hydrolyzes mischarged Thr-tRNA(Val) in a tRNA-dependent manner. The chain is Valine--tRNA ligase from Streptococcus agalactiae serotype III (strain NEM316).